Here is a 336-residue protein sequence, read N- to C-terminus: Biotin synthase (336 aa).

The Radical SAM core domain occupies 54-281 (NAIQLSTLLS…KAMVRLSAGR (228 aa)). [4Fe-4S] cluster-binding residues include cysteine 69, cysteine 73, and cysteine 76. Residues cysteine 113, cysteine 144, cysteine 204, and arginine 276 each contribute to the [2Fe-2S] cluster site.

Belongs to the radical SAM superfamily. Biotin synthase family. Homodimer. The cofactor is [4Fe-4S] cluster. [2Fe-2S] cluster serves as cofactor.

The enzyme catalyses (4R,5S)-dethiobiotin + (sulfur carrier)-SH + 2 reduced [2Fe-2S]-[ferredoxin] + 2 S-adenosyl-L-methionine = (sulfur carrier)-H + biotin + 2 5'-deoxyadenosine + 2 L-methionine + 2 oxidized [2Fe-2S]-[ferredoxin]. The protein operates within cofactor biosynthesis; biotin biosynthesis; biotin from 7,8-diaminononanoate: step 2/2. Catalyzes the conversion of dethiobiotin (DTB) to biotin by the insertion of a sulfur atom into dethiobiotin via a radical-based mechanism. This Burkholderia pseudomallei (strain 1710b) protein is Biotin synthase.